The chain runs to 264 residues: Pyridoxine 5'-phosphate synthase (264 aa).

N28 lines the 3-amino-2-oxopropyl phosphate pocket. Residue D30 to H31 participates in 1-deoxy-D-xylulose 5-phosphate binding. R39 provides a ligand contact to 3-amino-2-oxopropyl phosphate. Catalysis depends on H64, which acts as the Proton acceptor. 1-deoxy-D-xylulose 5-phosphate is bound by residues R66 and H71. The active-site Proton acceptor is E91. Position 121 (T121) interacts with 1-deoxy-D-xylulose 5-phosphate. H217 functions as the Proton donor in the catalytic mechanism. 3-amino-2-oxopropyl phosphate-binding positions include G218 and G239–H240.

It belongs to the PNP synthase family. In terms of assembly, homooctamer; tetramer of dimers.

The protein localises to the cytoplasm. The enzyme catalyses 3-amino-2-oxopropyl phosphate + 1-deoxy-D-xylulose 5-phosphate = pyridoxine 5'-phosphate + phosphate + 2 H2O + H(+). Its pathway is cofactor biosynthesis; pyridoxine 5'-phosphate biosynthesis; pyridoxine 5'-phosphate from D-erythrose 4-phosphate: step 5/5. Functionally, catalyzes the complicated ring closure reaction between the two acyclic compounds 1-deoxy-D-xylulose-5-phosphate (DXP) and 3-amino-2-oxopropyl phosphate (1-amino-acetone-3-phosphate or AAP) to form pyridoxine 5'-phosphate (PNP) and inorganic phosphate. The sequence is that of Pyridoxine 5'-phosphate synthase from Psychrobacter arcticus (strain DSM 17307 / VKM B-2377 / 273-4).